Here is a 77-residue protein sequence, read N- to C-terminus: Protein OPG195 (77 aa).

The signal sequence occupies residues 1-17 (MRSLIIVLLFPSIIYSM).

Belongs to the chordopoxvirinae B9 protein family.

The chain is Protein OPG195 (OPG197) from Homo sapiens (Human).